Here is a 224-residue protein sequence, read N- to C-terminus: Steroid receptor RNA activator 1 (224 aa).

Disordered regions lie at residues 1–90 and 201–224; these read MAEL…EPTS and AANEEKSAATAEKNHTIPGFQQAS. A phosphoserine mark is found at Ser-48, Ser-57, and Ser-75. Residues 58 to 76 are compositionally biased toward pro residues; sequence PGPPPMGPPPPSSKAPRSP. The segment covering 201–215 has biased composition (basic and acidic residues); the sequence is AANEEKSAATAEKNH.

The protein belongs to the SRA1 family. In terms of assembly, SRA1 RNA exists in a ribonucleoprotein complex containing NCOA1. The RNA also forms a complex with PUS1 and RARG in the nucleus. Interacts with AR. As to expression, highly expressed in liver and skeletal muscle and to a lesser extent in brain. Also expressed in both normal and tumorigenic breast epithelial cell lines. Significantly up-regulated in human tumors of the breast, ovary, and uterus.

It is found in the nucleus. It localises to the cytoplasm. Functionally, functional RNA which acts as a transcriptional coactivator that selectively enhances steroid receptor-mediated transactivation ligand-independently through a mechanism involving the modulating N-terminal domain (AF-1) of steroid receptors. Also mediates transcriptional coactivation of steroid receptors ligand-dependently through the steroid-binding domain (AF-2). Enhances cellular proliferation and differentiation and promotes apoptosis in vivo. May play a role in tumorigenesis. This Homo sapiens (Human) protein is Steroid receptor RNA activator 1.